The chain runs to 370 residues: Cyclin-A3-4 (370 aa).

Belongs to the cyclin family. Cyclin AB subfamily. Interacts with FZR2/CCS52A1, FZR1/CCS52A2 and FZR3/CCS52B.

This Arabidopsis thaliana (Mouse-ear cress) protein is Cyclin-A3-4 (CYCA3-4).